The chain runs to 509 residues: Oligo-1,6-glucosidase (509 aa).

Catalysis depends on Asp198, which acts as the Nucleophile. Glu254 (proton donor) is an active-site residue.

The protein belongs to the glycosyl hydrolase 13 family.

It is found in the cytoplasm. The enzyme catalyses Hydrolysis of (1-&gt;6)-alpha-D-glucosidic linkages in some oligosaccharides produced from starch and glycogen by alpha-amylase, and in isomaltose.. This Bacillus sp. (strain F5) protein is Oligo-1,6-glucosidase (malL).